The sequence spans 564 residues: Probable beta-glucosidase btgE (564 aa).

The N-terminal stretch at 1 to 18 (MRGAFLATAAAIAGTAMA) is a signal peptide. The tract at residues 285-304 (ATSSVAPSSSPSKPAAPSGA) is disordered. A glycan (N-linked (GlcNAc...) asparagine) is linked at Asn404. The active-site Proton donor is the Glu405. Glu501 (nucleophile) is an active-site residue.

It belongs to the glycosyl hydrolase 17 family.

The protein resides in the secreted. It localises to the cell wall. The catalysed reaction is Hydrolysis of terminal, non-reducing beta-D-glucosyl residues with release of beta-D-glucose.. The protein operates within glycan metabolism; cellulose degradation. Its function is as follows. Beta-glucosidases are one of a number of cellulolytic enzymes involved in the degradation of cellulosic biomass. Catalyzes the last step releasing glucose from the inhibitory cellobiose. The polypeptide is Probable beta-glucosidase btgE (btgE) (Aspergillus clavatus (strain ATCC 1007 / CBS 513.65 / DSM 816 / NCTC 3887 / NRRL 1 / QM 1276 / 107)).